The chain runs to 233 residues: Protein Mis18-alpha (233 aa).

Residues Ser-36, Ser-39, and Ser-40 each carry the phosphoserine modification. Residues 80 to 178 (PLVFLCSGCR…SVEAIESYVL (99 aa)) form the Mis18 domain. Cys-85, Cys-88, Cys-141, and Cys-144 together coordinate Zn(2+). A Glycyl lysine isopeptide (Lys-Gly) (interchain with G-Cter in SUMO2) cross-link involves residue Lys-162. The residue at position 233 (Ser-233) is a Phosphoserine.

Belongs to the mis18 family. Homodimer, and heterodimer with OIP5/MIS18B. Identified in a complex containing MIS18A, OIP5/MIS18B, MIS18BP1, RBBP7 and RBBP4. As to expression, detected in testis.

The protein resides in the nucleus. Its subcellular location is the chromosome. It localises to the centromere. Its function is as follows. Required for recruitment of CENPA to centromeres and normal chromosome segregation during mitosis. The sequence is that of Protein Mis18-alpha (MIS18A) from Homo sapiens (Human).